A 407-amino-acid polypeptide reads, in one-letter code: Phospholipid-transporting ATPase accessory subunit CDC50 (407 aa).

Residues 1–33 are disordered; that stretch reads MAPRRRRGAGQDGSDDGRSDSDAPKNRPPNTAF. The Cytoplasmic portion of the chain corresponds to 1–48; that stretch reads MAPRRRRGAGQDGSDDGRSDSDAPKNRPPNTAFRQQRMRAWQCVLTPK. Residues 15-25 show a composition bias toward basic and acidic residues; that stretch reads DDGRSDSDAPK. The helical transmembrane segment at 49–69 threads the bilayer; that stretch reads LIVTVFSILAAIYLGFGAWLT. The Extracellular segment spans residues 70–359; it reads YLAHTVRDLK…TMGSRNIWPG (290 aa). An intrachain disulfide couples Cys-85 to Cys-139. Residues Asn-131 and Asn-189 are each glycosylated (N-linked (GlcNAc...) asparagine). Cysteines 193 and 210 form a disulfide. Residues Asn-219, Asn-232, Asn-241, and Asn-314 are each glycosylated (N-linked (GlcNAc...) asparagine). A helical transmembrane segment spans residues 360 to 380; it reads IIFLIVGGICLVLDIYFILSF. Topologically, residues 381–407 are cytoplasmic; it reads FIWRPRKLGDPSYLSWNQPSAPGGHSS.

It belongs to the CDC50/LEM3 family. In terms of assembly, component of a flippase complex consisting of DNF1 and CDC50. Interacts with DNF1; the interaction is direct.

Its subcellular location is the cell membrane. Its function is as follows. Accessory component of a P4-ATPase flippase complex which catalyzes the hydrolysis of ATP coupled to the transport of phosphatidylcholine and phosphatidylserine from the lumen to the cytosolic leaflet of membranes and ensures the maintenance of asymmetric distribution of phospholipids. This is Phospholipid-transporting ATPase accessory subunit CDC50 from Chaetomium thermophilum (strain DSM 1495 / CBS 144.50 / IMI 039719) (Thermochaetoides thermophila).